The following is a 269-amino-acid chain: Expansin-A32 (269 aa).

The first 25 residues, 1-25 (MWCTWALGRVVLAVVFLVALAAGDA), serve as a signal peptide directing secretion. The region spanning 60–174 (DGACGYKDTS…RRVPCVKVGG (115 aa)) is the Expansin-like EG45 domain. Residues 184–264 (YFNLVMVSNV…DWQFGVTYQA (81 aa)) form the Expansin-like CBD domain.

The protein belongs to the expansin family. Expansin A subfamily.

The protein resides in the secreted. The protein localises to the cell wall. It is found in the membrane. In terms of biological role, may cause loosening and extension of plant cell walls by disrupting non-covalent bonding between cellulose microfibrils and matrix glucans. No enzymatic activity has been found. May be required for rapid internodal elongation in deepwater rice during submergence. This chain is Expansin-A32 (EXPA32), found in Oryza sativa subsp. japonica (Rice).